The sequence spans 157 residues: Protein Smg (157 aa).

The protein belongs to the Smg family.

This Shigella boydii serotype 18 (strain CDC 3083-94 / BS512) protein is Protein Smg.